We begin with the raw amino-acid sequence, 317 residues long: Olfactory receptor 5K16 (317 aa).

Residues 1 to 28 (MEKTNHSLTTQFILVGFSDHPDLKTPLF) lie on the Extracellular side of the membrane. N-linked (GlcNAc...) asparagine glycosylation occurs at Asn5. Residues 29–49 (LLFSVIYLVTMVGNLGLVAVI) form a helical membrane-spanning segment. The Cytoplasmic portion of the chain corresponds to 50–56 (YLEPRLH). The chain crosses the membrane as a helical span at residues 57 to 77 (TPMYIFLGNLALMDSCCSCAI). Residues 78–93 (TPKILENFFSVDRRIS) are Extracellular-facing. Residues 94-114 (LYECMAQFYFLCLAETADCFL) traverse the membrane as a helical segment. A disulfide bridge connects residues Cys97 and Cys189. Residues 115-144 (LAAMAYDRYVAICNPLQYHSMMSKKLSIQM) lie on the Cytoplasmic side of the membrane. A helical transmembrane segment spans residues 145–165 (SIGTFITSNLHSLIHVGCLLR). Residues 166-198 (LTFCKSNRIDHFFCDILPLYRLSCTDPFINELM) are Extracellular-facing. A helical transmembrane segment spans residues 199 to 219 (IYIFSMPIQVFTITTVLVSYF). Residues 220–239 (CILLTIFKMKSKDGRGKAFS) are Cytoplasmic-facing. A helical membrane pass occupies residues 240 to 259 (TCASHFFSVSIFYVCLLMYI). The Extracellular portion of the chain corresponds to 260–268 (RPFDEGNKD). The helical transmembrane segment at 269-289 (IPVAVFYTIIIPLLNPFIYSL) threads the bilayer. At 290–317 (RNKEVVNAVKKVMKTHSIFKNASASMAR) the chain is on the cytoplasmic side.

The protein belongs to the G-protein coupled receptor 1 family.

The protein resides in the cell membrane. In terms of biological role, potential odorant receptor. This Mus musculus (Mouse) protein is Olfactory receptor 5K16.